A 169-amino-acid polypeptide reads, in one-letter code: Small ribosomal subunit protein uS13c (169 aa).

A chloroplast-targeting transit peptide spans 1–47 (MAQMVAMPVAHSLSLICNWAKSNPLSRNTLALPASNTPNKQSLSIRC).

The protein belongs to the universal ribosomal protein uS13 family. In terms of assembly, part of the 30S ribosomal subunit.

It is found in the plastid. It localises to the chloroplast. Located at the top of the head of the 30S subunit, it contacts several helices of the 16S rRNA. This chain is Small ribosomal subunit protein uS13c (RPS13), found in Arabidopsis thaliana (Mouse-ear cress).